A 202-amino-acid polypeptide reads, in one-letter code: Glycerol-3-phosphate acyltransferase (202 aa).

The next 6 helical transmembrane spans lie at 2 to 22, 54 to 74, 85 to 105, 120 to 140, 141 to 161, and 162 to 182; these read MIVV…GYVI, FIVT…PIWF, FFTH…YPIY, VVLG…FGVL, YIFK…VIGS, and LIIQ…ILIV.

The protein belongs to the PlsY family. As to quaternary structure, probably interacts with PlsX.

It localises to the cell membrane. The catalysed reaction is an acyl phosphate + sn-glycerol 3-phosphate = a 1-acyl-sn-glycero-3-phosphate + phosphate. It participates in lipid metabolism; phospholipid metabolism. Its function is as follows. Catalyzes the transfer of an acyl group from acyl-phosphate (acyl-PO(4)) to glycerol-3-phosphate (G3P) to form lysophosphatidic acid (LPA). This enzyme utilizes acyl-phosphate as fatty acyl donor, but not acyl-CoA or acyl-ACP. The chain is Glycerol-3-phosphate acyltransferase from Staphylococcus haemolyticus (strain JCSC1435).